The sequence spans 584 residues: Tyrosine-protein kinase Dnt (584 aa).

An N-terminal signal peptide occupies residues 1–40 (MESVNKCGKSASTRNCTVKMSRKMWVLSLLALAALQLHSG). At 41-208 (SEVAAHLNVF…LETVMLPPTG (168 aa)) the chain is on the extracellular side. The WIF domain maps to 49 to 180 (VFLNPVEVMR…HLVFRRKKIC (132 aa)). Asparagine 124, asparagine 163, asparagine 168, and asparagine 183 each carry an N-linked (GlcNAc...) asparagine glycan. A helical membrane pass occupies residues 209–229 (LITLVVGVSVAMGSVCLLLMI). Over 230–584 (AYCVKGAANK…EFYSQITRYV (355 aa)) the chain is Cytoplasmic. The segment at 241 to 261 (QHHQHGGQPMRTSSFQRLNTH) is disordered. Polar residues predominate over residues 250–261 (MRTSSFQRLNTH). The Protein kinase domain maps to 317-577 (VRLSSLLQEG…QLQSCLSEFY (261 aa)). ATP is bound by residues 323 to 331 (LQEGTFGRV) and lysine 345. Residue aspartate 442 is the Proton acceptor of the active site. Tyrosine 472 is subject to Phosphotyrosine; by autocatalysis.

It belongs to the protein kinase superfamily. Tyr protein kinase family. As to expression, expressed in dynamic domains in the embryonic epidermis, many of which border on sites of epithelial invagination into the embryo interior, including ventral furrow, cephalic furrow, fore- and hindgut, optic lobe and tracheal pits. Later in embryogenesis, expression is seen in imaginal tissues.

It is found in the cell membrane. It carries out the reaction L-tyrosyl-[protein] + ATP = O-phospho-L-tyrosyl-[protein] + ADP + H(+). Its function is as follows. May play an essential role in neuronal pathway recognition and ventral muscle attachment site selection. The sequence is that of Tyrosine-protein kinase Dnt (dnt) from Drosophila melanogaster (Fruit fly).